Reading from the N-terminus, the 528-residue chain is uncharacterized protein (528 aa).

Positions Met1–Val51 are disordered. 2 consecutive repeat copies span residues Glu185–Tyr213 and Glu285–Leu313. Residues Glu185 to Leu313 form a 2 X 29 AA repeats region. Disordered stretches follow at residues Arg467–Thr497 and Thr509–Tyr528. The segment covering Ser472–Asp496 has biased composition (polar residues).

This is an uncharacterized protein from Caenorhabditis elegans.